A 321-amino-acid chain; its full sequence is Probable pectate lyase A (321 aa).

The signal sequence occupies residues 1 to 18; it reads MKFVATLIACGLSGLALA. N-linked (GlcNAc...) asparagine glycosylation occurs at Asn-93. Residues Asp-134, Asp-163, and Asp-167 each contribute to the Ca(2+) site. Arg-220 is an active-site residue. N-linked (GlcNAc...) asparagine glycosylation is present at Asn-238.

It belongs to the polysaccharide lyase 1 family. The cofactor is Ca(2+).

It is found in the secreted. It catalyses the reaction Eliminative cleavage of (1-&gt;4)-alpha-D-galacturonan to give oligosaccharides with 4-deoxy-alpha-D-galact-4-enuronosyl groups at their non-reducing ends.. In terms of biological role, pectinolytic enzyme consist of four classes of enzymes: pectin lyase, polygalacturonase, pectin methylesterase and rhamnogalacturonase. Among pectinolytic enzymes, pectin lyase is the most important in depolymerization of pectin, since it cleaves internal glycosidic bonds of highly methylated pectins. Favors pectate, the anion, over pectin, the methyl ester. This Neosartorya fischeri (strain ATCC 1020 / DSM 3700 / CBS 544.65 / FGSC A1164 / JCM 1740 / NRRL 181 / WB 181) (Aspergillus fischerianus) protein is Probable pectate lyase A (plyA).